The primary structure comprises 152 residues: UPF0178 protein YE1167 (152 aa).

Belongs to the UPF0178 family.

This chain is UPF0178 protein YE1167, found in Yersinia enterocolitica serotype O:8 / biotype 1B (strain NCTC 13174 / 8081).